A 207-amino-acid chain; its full sequence is Ribonuclease HII (207 aa).

Residues 12-205 (GLVVGIDEVG…IRNMIEAEAH (194 aa)) form the RNase H type-2 domain. A divalent metal cation contacts are provided by Asp-18, Glu-19, and Asp-114.

The protein belongs to the RNase HII family. Mn(2+) is required as a cofactor. Requires Mg(2+) as cofactor.

The protein resides in the cytoplasm. The enzyme catalyses Endonucleolytic cleavage to 5'-phosphomonoester.. In terms of biological role, endonuclease that specifically degrades the RNA of RNA-DNA hybrids. This is Ribonuclease HII from Gluconobacter oxydans (strain 621H) (Gluconobacter suboxydans).